Consider the following 512-residue polypeptide: Mannose-1-phosphate guanylyltransferase (512 aa).

The protein belongs to the mannose-6-phosphate isomerase type 2 family.

It carries out the reaction alpha-D-mannose 1-phosphate + GTP + H(+) = GDP-alpha-D-mannose + diphosphate. The polypeptide is Mannose-1-phosphate guanylyltransferase (noeJ) (Sinorhizobium fredii (strain NBRC 101917 / NGR234)).